The chain runs to 676 residues: Electrogenic aspartate/glutamate antiporter SLC25A12, mitochondrial (676 aa).

Alanine 2 is modified (N-acetylalanine). The interval 2–293 (AVKVHTTKRG…TLADIERIAP (292 aa)) is regulatory N-terminal domain. At 2 to 328 (AVKVHTTKRG…WLQIAESAYR (327 aa)) the chain is on the mitochondrial intermembrane side. Residues aspartate 65, threonine 67, aspartate 69, leucine 71, and glutamate 76 each contribute to the Ca(2+) site. EF-hand domains are found at residues 65–76 (DQTKDGLISYQE), 86–121 (APDSMFIVAFQLFDKSGNGEVTFENVKEIFGQTIIH), 125–155 (PFNWDCEFIRLHFGHNRKKHLNYVEFTQFLQ), and 157–192 (LQLEHARQAFALKDKSKSGMISGLDFSDVMVTIRSH). Positions 294–309 (LAEGALPYNLAELQRQ) are linker loop domain. Residues 319-611 (WLQIAESAYR…RWFYIDFGGL (293 aa)) form a carrier domain region. 3 Solcar repeats span residues 323 to 415 (AESA…VRDK), 423 to 507 (IPLP…CKLL), and 515 to 603 (VGGI…LQRW). A helical membrane pass occupies residues 329–346 (FTLGSVAGAVGATAVYPI). At 347 to 389 (DLVKTRMQNQRGTGSVVGELMYKNSFDCFKKVLRYEGFFGLYR) the chain is on the mitochondrial matrix side. A helical membrane pass occupies residues 390–409 (GLIPQLIGVAPEKAIKLTVN). The Mitochondrial intermembrane segment spans residues 410 to 432 (DFVRDKFTRRDGSIPLPAEILAG). Residues 433 to 446 (GCAGGSQVIFTNPL) traverse the membrane as a helical segment. The Mitochondrial matrix segment spans residues 447–481 (EIVKIRLQVAGEITTGPRVSALNVLQDLGLFGLYK). Residues 482–501 (GAKACFLRDIPFSAIYFPVY) traverse the membrane as a helical segment. At 502–520 (AHCKLLLADENGHVGGINL) the chain is on the mitochondrial intermembrane side. A helical transmembrane segment spans residues 521–538 (LTAGAMAGVPAASLVTPA). Residues 539 to 577 (DVIKTRLQVAARAGQTTYSGVIDCFRKILREEGPSAFWK) are Mitochondrial matrix-facing. Residues 578-597 (GTAARVFRSSPQFGVTLVTY) traverse the membrane as a helical segment. The Mitochondrial intermembrane portion of the chain corresponds to 598–676 (ELLQRWFYID…AQPKVAAAAQ (79 aa)). The interval 612–674 (KPSGSEPTPK…AAAQPKVAAA (63 aa)) is C-terminal domain.

The protein belongs to the mitochondrial carrier (TC 2.A.29) family. As to quaternary structure, homodimer (via N-terminus).

The protein localises to the mitochondrion inner membrane. The enzyme catalyses L-aspartate(in) + L-glutamate(out) + H(+)(out) = L-aspartate(out) + L-glutamate(in) + H(+)(in). It catalyses the reaction 3-sulfino-L-alanine(out) + L-glutamate(in) + H(+)(in) = 3-sulfino-L-alanine(in) + L-glutamate(out) + H(+)(out). The catalysed reaction is 3-sulfino-L-alanine(out) + L-aspartate(in) = 3-sulfino-L-alanine(in) + L-aspartate(out). Its activity is regulated as follows. L-aspartate and 3-sulfino-L-alanine uptake are both inhibited by glisoxepide. Its function is as follows. Mitochondrial electrogenic aspartate/glutamate antiporter that favors efflux of aspartate and entry of glutamate and proton within the mitochondria as part of the malate-aspartate shuttle. Also mediates the uptake of L-cysteinesulfinate (3-sulfino-L-alanine) by mitochondria in exchange of L-glutamate and proton. Can also exchange L-cysteinesulfinate with aspartate in their anionic form without any proton translocation. Lacks transport activity towards L-glutamine or gamma-aminobutyric acid (GABA). The sequence is that of Electrogenic aspartate/glutamate antiporter SLC25A12, mitochondrial from Rattus norvegicus (Rat).